The sequence spans 90 residues: DNA-binding protein HU-alpha (90 aa).

It belongs to the bacterial histone-like protein family. In terms of assembly, heterodimer of an alpha and a beta chain.

In terms of biological role, histone-like DNA-binding protein which is capable of wrapping DNA to stabilize it, and thus to prevent its denaturation under extreme environmental conditions. This Vibrio cholerae serotype O1 (strain ATCC 39315 / El Tor Inaba N16961) protein is DNA-binding protein HU-alpha (hupA).